We begin with the raw amino-acid sequence, 475 residues long: Beta-amyrin 6-beta-monooxygenase (475 aa).

A helical transmembrane segment spans residues 6–22 (LYSLAFALVYISLYFIF). Cys423 is a binding site for heme.

This sequence belongs to the cytochrome P450 family. Heme is required as a cofactor. In terms of tissue distribution, specifically expressed in roots.

The protein localises to the membrane. It carries out the reaction beta-amyrin + reduced [NADPH--hemoprotein reductase] + O2 = daturadiol + oxidized [NADPH--hemoprotein reductase] + H2O + H(+). In terms of biological role, catalyzes the C-6 beta-hydroxylation of beta-amyrin to form daturadiol. Catalyzes the C-6 beta-hydroxylation of alpha-amyrin to form 6-beta-hydroxy-alpha-amyrin. In Solanum lycopersicum (Tomato), this protein is Beta-amyrin 6-beta-monooxygenase.